The sequence spans 288 residues: MQIPQAPWPVVWAVLQLGWRPGWFLDSPDRPWNPPTFSPALLVVTEGDNATFTCSFSNTSESFVLNWYRMSPSNQTDKLAAFPEDRSQPGQDCRFRVTQLPNGRDFHMSVVRARRNDSGTYLCGAISLAPKAQIKESLRAELRVTERRAEVPTAHPSPSPRPAGQFQTLVVGVVGGLLGSLVLLVWVLAVICSRAARGTIGARRTGQPLKEDPSAVPVFSVDYGELDFQWREKTPEPPVPCVPEQTEYATIVFPSGMGTSSPARRGSADGPRSAQPLRPEDGHCSWPL.

A signal peptide spans 1-24 (MQIPQAPWPVVWAVLQLGWRPGWF). Residues 25–34 (LDSPDRPWNP) are nivolumab binding. At 25–170 (LDSPDRPWNP…RPAGQFQTLV (146 aa)) the chain is on the extracellular side. Positions 35–145 (PTFSPALLVV…ESLRAELRVT (111 aa)) constitute an Ig-like V-type domain. N-linked (GlcNAc...) asparagine glycans are attached at residues asparagine 49, asparagine 58, asparagine 74, and asparagine 116. Cysteine 54 and cysteine 123 are joined by a disulfide. The interval 70-77 (MSPSNQTD) is interaction with CD274/PDCD1L1. Positions 74–99 (NQTDKLAAFPEDRSQPGQDCRFRVTQ) are pembrolizumab binding. The helical transmembrane segment at 171–191 (VGVVGGLLGSLVLLVWVLAVI) threads the bilayer. Residues 192–288 (CSRAARGTIG…PEDGHCSWPL (97 aa)) lie on the Cytoplasmic side of the membrane. Residues 221–226 (VDYGEL) carry the ITIM motif motif. Phosphotyrosine is present on tyrosine 223. Lysine 233 participates in a covalent cross-link: Glycyl lysine isopeptide (Lys-Gly) (interchain with G-Cter in ubiquitin). Threonine 234 carries the post-translational modification Phosphothreonine; by MAPK3. An ITSM motif motif is present at residues 247 to 251 (EYATI). Tyrosine 248 carries the phosphotyrosine modification. The segment at 254–288 (PSGMGTSSPARRGSADGPRSAQPLRPEDGHCSWPL) is disordered. The segment covering 278-288 (RPEDGHCSWPL) has biased composition (basic and acidic residues).

Monomer. Interacts with CD274/PDCD1L1. Interacts with CD273/PDCD1LG2. Interacts with FBXO38; leading to ubiquitination and degradation of PDCD1 by the proteasome. Post-translationally, ubiquitinated at Lys-233 by the SCF(FBXO38) complex, leading to its proteasomal degradation. Ubiquitinated via 'Lys-48'-linked polyubiquitin chains. Deubiquitinated and thus stabilized by USP5. In terms of processing, tyrosine phosphorylated at Tyr-223 (within ITIM motif) and Tyr-248 (ITSM motif) upon ligand binding. Phosphorylation at Tyr-248 promotes the recruitment of the protein tyrosine phosphatase PTPN11/SHP-2 that mediates dephosphorylation of key TCR proximal signaling molecules, such as ZAP70, PRKCQ/PKCtheta and CD247/CD3zeta. Phosphorylation at Thr-234 promotes the recruitment of the deubiquitinase USP5. N-glycosylation at Asn-58 contains at least two N-acetylglucosamine units and one fucose. N-glycosylation does not affect binding to nivolumab drug.

It is found in the cell membrane. Inhibited by pembrolizumab (also named MK-3475 or lambrolizumab), a monoclonal antibody that prevents the interaction with CD274/PDCD1L1. Inhibited by nivolumab (also named ONO-4538, BMS-936558 or Opdivo), a monoclonal antibody that prevents the interaction with CD274/PDCD1L1. The interaction with nivolumab is not dependent on glycosylation and depends on a loop at the N-terminus (N-terminal loop, corresponding to residues 25-34). Targeting the interaction between PDCD1 and CD274/PDCD1L1 with pembrolizumab and nivolumab antibodies has demonstrated great promise as a strategy for controlling and eradicating cancer. Pembrolizumab and nivolumab are used for treatment of patients with advanced melanoma. These antibodies are also effective against other cancers, such as non-small cell lung cancer, renal cell carcinoma, bladder cancer and Hodgkin's lymphoma. Functionally, inhibitory receptor on antigen activated T-cells that plays a critical role in induction and maintenance of immune tolerance to self. Delivers inhibitory signals upon binding to ligands CD274/PDCD1L1 and CD273/PDCD1LG2. Following T-cell receptor (TCR) engagement, PDCD1 associates with CD3-TCR in the immunological synapse and directly inhibits T-cell activation. Suppresses T-cell activation through the recruitment of PTPN11/SHP-2: following ligand-binding, PDCD1 is phosphorylated within the ITSM motif, leading to the recruitment of the protein tyrosine phosphatase PTPN11/SHP-2 that mediates dephosphorylation of key TCR proximal signaling molecules, such as ZAP70, PRKCQ/PKCtheta and CD247/CD3zeta. In terms of biological role, the PDCD1-mediated inhibitory pathway is exploited by tumors to attenuate anti-tumor immunity and escape destruction by the immune system, thereby facilitating tumor survival. The interaction with CD274/PDCD1L1 inhibits cytotoxic T lymphocytes (CTLs) effector function. The blockage of the PDCD1-mediated pathway results in the reversal of the exhausted T-cell phenotype and the normalization of the anti-tumor response, providing a rationale for cancer immunotherapy. This Homo sapiens (Human) protein is Programmed cell death protein 1.